A 388-amino-acid polypeptide reads, in one-letter code: Formate-dependent phosphoribosylglycinamide formyltransferase (388 aa).

N(1)-(5-phospho-beta-D-ribosyl)glycinamide contacts are provided by residues 20 to 21 (EL) and Glu80. ATP-binding positions include Arg112, Lys153, 158–163 (SSGKGQ), 193–196 (EEFV), and Glu201. The 190-residue stretch at 117–306 (RLASEKLGLR…EFEIHVRSIL (190 aa)) folds into the ATP-grasp domain. Mg(2+) is bound by residues Glu265 and Glu277. N(1)-(5-phospho-beta-D-ribosyl)glycinamide-binding positions include Asp284, Lys352, and 359 to 360 (RR).

This sequence belongs to the PurK/PurT family. Homodimer.

It catalyses the reaction N(1)-(5-phospho-beta-D-ribosyl)glycinamide + formate + ATP = N(2)-formyl-N(1)-(5-phospho-beta-D-ribosyl)glycinamide + ADP + phosphate + H(+). Its pathway is purine metabolism; IMP biosynthesis via de novo pathway; N(2)-formyl-N(1)-(5-phospho-D-ribosyl)glycinamide from N(1)-(5-phospho-D-ribosyl)glycinamide (formate route): step 1/1. Functionally, involved in the de novo purine biosynthesis. Catalyzes the transfer of formate to 5-phospho-ribosyl-glycinamide (GAR), producing 5-phospho-ribosyl-N-formylglycinamide (FGAR). Formate is provided by PurU via hydrolysis of 10-formyl-tetrahydrofolate. The polypeptide is Formate-dependent phosphoribosylglycinamide formyltransferase (Methanococcus vannielii (strain ATCC 35089 / DSM 1224 / JCM 13029 / OCM 148 / SB)).